We begin with the raw amino-acid sequence, 664 residues long: Glycine--tRNA ligase beta subunit (664 aa).

It belongs to the class-II aminoacyl-tRNA synthetase family. Tetramer of two alpha and two beta subunits.

Its subcellular location is the cytoplasm. The enzyme catalyses tRNA(Gly) + glycine + ATP = glycyl-tRNA(Gly) + AMP + diphosphate. In Rickettsia conorii (strain ATCC VR-613 / Malish 7), this protein is Glycine--tRNA ligase beta subunit.